A 38-amino-acid chain; its full sequence is Photosystem I reaction center subunit IX (38 aa).

A helical membrane pass occupies residues 4–24; the sequence is FLTTAPVVAAIWFTATAGILI.

It belongs to the PsaJ family.

The protein resides in the cellular thylakoid membrane. May help in the organization of the PsaE and PsaF subunits. In Synechococcus sp. (strain CC9902), this protein is Photosystem I reaction center subunit IX.